The sequence spans 616 residues: Dihydroxy-acid dehydratase (616 aa).

Mg(2+) is bound at residue aspartate 81. Cysteine 122 is a [2Fe-2S] cluster binding site. 2 residues coordinate Mg(2+): aspartate 123 and lysine 124. Lysine 124 carries the N6-carboxylysine modification. Position 195 (cysteine 195) interacts with [2Fe-2S] cluster. Glutamate 491 is a Mg(2+) binding site. The Proton acceptor role is filled by serine 517.

The protein belongs to the IlvD/Edd family. As to quaternary structure, homodimer. [2Fe-2S] cluster is required as a cofactor. Requires Mg(2+) as cofactor.

The enzyme catalyses (2R)-2,3-dihydroxy-3-methylbutanoate = 3-methyl-2-oxobutanoate + H2O. The catalysed reaction is (2R,3R)-2,3-dihydroxy-3-methylpentanoate = (S)-3-methyl-2-oxopentanoate + H2O. Its pathway is amino-acid biosynthesis; L-isoleucine biosynthesis; L-isoleucine from 2-oxobutanoate: step 3/4. It functions in the pathway amino-acid biosynthesis; L-valine biosynthesis; L-valine from pyruvate: step 3/4. Its function is as follows. Functions in the biosynthesis of branched-chain amino acids. Catalyzes the dehydration of (2R,3R)-2,3-dihydroxy-3-methylpentanoate (2,3-dihydroxy-3-methylvalerate) into 2-oxo-3-methylpentanoate (2-oxo-3-methylvalerate) and of (2R)-2,3-dihydroxy-3-methylbutanoate (2,3-dihydroxyisovalerate) into 2-oxo-3-methylbutanoate (2-oxoisovalerate), the penultimate precursor to L-isoleucine and L-valine, respectively. The chain is Dihydroxy-acid dehydratase from Escherichia coli O8 (strain IAI1).